An 837-amino-acid polypeptide reads, in one-letter code: Tuftelin-interacting protein 11 (837 aa).

Composition is skewed to basic and acidic residues over residues 1–13 and 44–64; these read MSLS…GEGH and QTKE…EERP. Disordered stretches follow at residues 1 to 21, 34 to 73, and 85 to 135; these read MSLS…DDER, EFNP…RARD, and LKKG…FAGG. Residues 1-50 are required for interaction with DHX15; it reads MSLSHLYRDGEGHLDDDDDERENFEITDWDLQNEFNPNRQRHWQTKEEAT. S2, S59, S95, and S98 each carry phosphoserine. The segment covering 91–100 has biased composition (acidic residues); sequence EEADSEDSDA. A compositionally biased stretch (basic and acidic residues) spans 101 to 116; the sequence is EEKPVKQEDFPKDLGP. At S144 the chain carries Phosphoserine. One can recognise a G-patch domain in the interval 149–195; that stretch reads TKGIGQKLLQKMGYVPGRGLGKNAQGIINPIEAKQRKGKGAVGAYGS. The disordered stretch occupies residues 183-236; it reads QRKGKGAVGAYGSERTTQSLQDFPVADSEEEAEEEFQKELSQWRKDPSGSKKKP. Phosphoserine is present on S210. Positions 217–231 are enriched in basic and acidic residues; the sequence is EFQKELSQWRKDPSG. Positions 700–705 match the Nuclear localization signal motif; that stretch reads VKDKFN. Residues 710-734 form a required for nuclear speckle localization region; sequence IMNRAVSSNVGAYMQPGARENIAYL.

The protein belongs to the TFP11/STIP family. In terms of assembly, identified in the spliceosome C complex. Found in the Intron Large (IL) complex, a post-mRNA release spliceosomal complex containing the excised intron, U2, U5 and U6 snRNPs, and splicing factors. Interacts with TUFT1. Interacts with DHX15; indicative for a recruitment of DHX15 to the IL complex. Interacts with GCFC2.

It localises to the cytoplasm. It is found in the nucleus. Involved in pre-mRNA splicing, specifically in spliceosome disassembly during late-stage splicing events. Intron turnover seems to proceed through reactions in two lariat-intron associated complexes termed Intron Large (IL) and Intron Small (IS). In cooperation with DHX15 seems to mediate the transition of the U2, U5 and U6 snRNP-containing IL complex to the snRNP-free IS complex leading to efficient debranching and turnover of excised introns. May play a role in the differentiation of ameloblasts and odontoblasts or in the forming of the enamel extracellular matrix. This Rattus norvegicus (Rat) protein is Tuftelin-interacting protein 11 (Tfip11).